Here is a 158-residue protein sequence, read N- to C-terminus: Small ribosomal subunit protein uS9 (158 aa).

A compositionally biased stretch (polar residues) spans 1–20 (MSETMQSLDQLSALKTTQPD). The disordered stretch occupies residues 1-29 (MSETMQSLDQLSALKTTQPDAPTYTKKVD).

Belongs to the universal ribosomal protein uS9 family.

In Rhodopseudomonas palustris (strain BisB5), this protein is Small ribosomal subunit protein uS9.